The primary structure comprises 152 residues: Calmodulin (152 aa).

An N-acetylalanine modification is found at A2. 4 EF-hand domains span residues E10–N45, P46–D81, D83–K118, and L119–N152. Ca(2+)-binding residues include D23, D25, D27, S29, E34, D59, D61, N63, N65, E70, D96, D98, N100, Y102, E107, D132, D134, D136, Q138, and E143.

Belongs to the calmodulin family. As to quaternary structure, interacts with cmbB, numA/nucleomorphin, pgkA/phosphoglycerate kinase, and thyB/thymidine kinase in the presence of Ca(2+). Interacts with dwwA in the absence of Ca(2+). Post-translationally, the N-terminus is blocked. Trimethylation of Lys-118 observed in other calmodulins is absent here.

Its subcellular location is the contractile vacuole. Functionally, calmodulin mediates the control of a large number of enzymes, ion channels and other proteins by Ca(2+). Among the enzymes to be stimulated by the calmodulin-Ca(2+) complex are a number of protein kinases and phosphatases. The chain is Calmodulin (calA) from Dictyostelium discoideum (Social amoeba).